We begin with the raw amino-acid sequence, 757 residues long: Xaa-Pro dipeptidyl-peptidase (757 aa).

Active-site charge relay system residues include serine 348, aspartate 468, and histidine 498.

This sequence belongs to the peptidase S15 family. As to quaternary structure, homodimer.

The protein localises to the cytoplasm. It catalyses the reaction Hydrolyzes Xaa-Pro-|- bonds to release unblocked, N-terminal dipeptides from substrates including Ala-Pro-|-p-nitroanilide and (sequentially) Tyr-Pro-|-Phe-Pro-|-Gly-Pro-|-Ile.. Its function is as follows. Removes N-terminal dipeptides sequentially from polypeptides having unsubstituted N-termini provided that the penultimate residue is proline. This is Xaa-Pro dipeptidyl-peptidase from Streptococcus pneumoniae (strain ATCC BAA-255 / R6).